Consider the following 354-residue polypeptide: Histidinol-phosphate aminotransferase (354 aa).

Lys-210 is modified (N6-(pyridoxal phosphate)lysine).

Belongs to the class-II pyridoxal-phosphate-dependent aminotransferase family. Histidinol-phosphate aminotransferase subfamily. In terms of assembly, homodimer. It depends on pyridoxal 5'-phosphate as a cofactor.

It catalyses the reaction L-histidinol phosphate + 2-oxoglutarate = 3-(imidazol-4-yl)-2-oxopropyl phosphate + L-glutamate. Its pathway is amino-acid biosynthesis; L-histidine biosynthesis; L-histidine from 5-phospho-alpha-D-ribose 1-diphosphate: step 7/9. In Clostridium botulinum (strain Kyoto / Type A2), this protein is Histidinol-phosphate aminotransferase.